The following is a 707-amino-acid chain: MSPHGDGRGQAQGRAVRVGLRRSGGIRGGVAVFAAVAAVFTFTLPPSVPGGDSGELITAAHELGVAHPPGYPLFTLVAKLAITLFPFGSIAYRVNLLCGLFGAVAASLLFFTVFRLSGSSAGGILAAGVFSFSRLTWQWSIAAEVFSLNNLFVGLLMALTVHFEEAATAKERSKVAKIGAFCCGLSLCNQHTIILYVLCIIPWILFQLLKKKELSLGSLLKLSLYFSAGLLPYVHLPISSYLNHARWTWGDQTTLQGFLTHFLREEYGTFSLAKSEIGSSMSEILLSQVTNMRTELSFNIQALAVCANICLATKDRQNPSLVWLFTGMFCIYSLFFAWRANLDISKPLFMGVVERFWMQSNAVVAVLAGIGLAAVVSETNRVLNSNGLQCLEWLSATLFVVYQIYSNYSVCDQRTNYVIDKFAKNLLTSMPHDAIILLRGDLPGNSLRYMHYCEGLRPDISLVDQEMMTYEWYLPKMAKHLPGVNFPGNRWNPVEGILPSGMVTFNLYHFLEVNKQKETFVCIGIHEGDPTWKKNYSLWPWGSCDKLVPLEIVFNPEEWIKLTKSIYNWTEEYGRFDPSSWESVANEEMWQARMKTPFFIFNLAETAHMPSKVKAQLYAQAYDLYKEIVYLQKEHPVNWHKNYAIACERMLRLQARDADPEVLLSETIRHFRLYSQKAPNDPQQADILGALKHLRKELQSLRNRKNV.

Helical transmembrane passes span 28 to 48 (GGVA…PPSV), 71 to 91 (YPLF…GSIA), 94 to 114 (VNLL…FTVF), 141 to 161 (IAAE…ALTV), 189 to 209 (NQHT…FQLL), 222 to 242 (LSLY…SSYL), 318 to 338 (NPSL…FFAW), and 356 to 376 (FWMQ…AAVV). Residues 377–707 (SETNRVLNSN…LQSLRNRKNV (331 aa)) are Lumenal-facing. N-linked (GlcNAc...) asparagine glycans are attached at residues Asn407, Asn535, and Asn568.

The protein belongs to the glycosyltransferase 117 (GT117) family. Expressed in brain, heart, kidney, liver, lung, pancreas and placenta but are not detected in skeletal muscle.

The protein localises to the endoplasmic reticulum membrane. It localises to the membrane. The catalysed reaction is a di-trans,poly-cis-dolichyl beta-D-mannosyl phosphate + L-seryl-[protein] = 3-O-(alpha-D-mannosyl)-L-seryl-[protein] + a di-trans,poly-cis-dolichyl phosphate + H(+). It catalyses the reaction a di-trans,poly-cis-dolichyl beta-D-mannosyl phosphate + L-threonyl-[protein] = 3-O-(alpha-D-mannosyl)-L-threonyl-[protein] + a di-trans,poly-cis-dolichyl phosphate + H(+). O-mannosyl-transferase that transfers mannosyl residues to the hydroxyl group of serine or threonine residues of proteins. Specifically glycosylates the IPT/TIG domain of target proteins, such as MET and MST1R/RON. TMEM260-mediated O-mannosylated residues are composed of single mannose glycans that are not elongated or modified. This chain is Protein O-mannosyl-transferase TMEM260, found in Homo sapiens (Human).